The following is a 349-amino-acid chain: DNA polymerase IV (349 aa).

The UmuC domain maps to 4–185 (IIHIDCDCFY…LPVAKLHGVG (182 aa)). Mg(2+)-binding residues include aspartate 8 and aspartate 103. Glutamate 104 is an active-site residue.

This sequence belongs to the DNA polymerase type-Y family. In terms of assembly, monomer. Requires Mg(2+) as cofactor.

The protein resides in the cytoplasm. The enzyme catalyses DNA(n) + a 2'-deoxyribonucleoside 5'-triphosphate = DNA(n+1) + diphosphate. Poorly processive, error-prone DNA polymerase involved in untargeted mutagenesis. Copies undamaged DNA at stalled replication forks, which arise in vivo from mismatched or misaligned primer ends. These misaligned primers can be extended by PolIV. Exhibits no 3'-5' exonuclease (proofreading) activity. May be involved in translesional synthesis, in conjunction with the beta clamp from PolIII. This chain is DNA polymerase IV, found in Pseudomonas paraeruginosa (strain DSM 24068 / PA7) (Pseudomonas aeruginosa (strain PA7)).